The chain runs to 93 residues: Large ribosomal subunit protein uL23cz/uL23cy (93 aa).

This sequence belongs to the universal ribosomal protein uL23 family. As to quaternary structure, part of the 50S ribosomal subunit.

The protein resides in the plastid. Its subcellular location is the chloroplast. In terms of biological role, binds to 23S rRNA. The sequence is that of Large ribosomal subunit protein uL23cz/uL23cy (rpl23-A) from Helianthus annuus (Common sunflower).